Consider the following 312-residue polypeptide: DNA-directed RNA polymerase subunit alpha (312 aa).

Residues 1 to 227 form an alpha N-terminal domain (alpha-NTD) region; it reads MNNFYIKCLK…SFFSSLLENK (227 aa). Residues 243–312 are alpha C-terminal domain (alpha-CTD); it reads PKNPHTNIAI…KNKLGIVLSN (70 aa).

The protein belongs to the RNA polymerase alpha chain family. In plastids the minimal PEP RNA polymerase catalytic core is composed of four subunits: alpha, beta, beta', and beta''. When a (nuclear-encoded) sigma factor is associated with the core the holoenzyme is formed, which can initiate transcription.

Its subcellular location is the plastid. The protein localises to the chloroplast. The catalysed reaction is RNA(n) + a ribonucleoside 5'-triphosphate = RNA(n+1) + diphosphate. DNA-dependent RNA polymerase catalyzes the transcription of DNA into RNA using the four ribonucleoside triphosphates as substrates. The protein is DNA-directed RNA polymerase subunit alpha of Trieres chinensis (Marine centric diatom).